A 1231-amino-acid polypeptide reads, in one-letter code: Pesticidal crystal protein Cry1Bd (1231 aa).

It belongs to the delta endotoxin family.

Promotes colloidosmotic lysis by binding to the midgut epithelial cells of lepidopteran larvae. Toxic to Plutella xylostella. The chain is Pesticidal crystal protein Cry1Bd (cry1Bd) from Bacillus thuringiensis subsp. wuhanensis.